The sequence spans 267 residues: Orotidine 5'-phosphate decarboxylase (267 aa).

Substrate-binding positions include aspartate 37, 59–61 (KTH), 91–100 (DRKFADIGNT), tyrosine 217, and arginine 235. Lysine 93 (proton donor) is an active-site residue.

Belongs to the OMP decarboxylase family.

The catalysed reaction is orotidine 5'-phosphate + H(+) = UMP + CO2. The protein operates within pyrimidine metabolism; UMP biosynthesis via de novo pathway; UMP from orotate: step 2/2. In Eremothecium gossypii (strain ATCC 10895 / CBS 109.51 / FGSC 9923 / NRRL Y-1056) (Yeast), this protein is Orotidine 5'-phosphate decarboxylase (URA3).